The primary structure comprises 186 residues: MIEIPSDFSEQTAKFTQILAKFNRVHSLTNYKNFDEQISDSISPLKWLKFYPETAIDVGSGAGFPAIFLAMILKDCRWWLFEPNAKKSSFLSYVKAELNLKNVSVKSCKIEACEPFVAQLITSRALMKTKELLKICRGFYDNETQILLYKGSSVEGELDGLDAQIYGVKNRNYVFLNVKRDWKENE.

S-adenosyl-L-methionine is bound by residues G59, F64, 110-111 (IE), and R124.

It belongs to the methyltransferase superfamily. RNA methyltransferase RsmG family.

It localises to the cytoplasm. It catalyses the reaction guanosine(527) in 16S rRNA + S-adenosyl-L-methionine = N(7)-methylguanosine(527) in 16S rRNA + S-adenosyl-L-homocysteine. Its function is as follows. Specifically methylates the N7 position of guanine in position 527 of 16S rRNA. The chain is Ribosomal RNA small subunit methyltransferase G from Campylobacter curvus (strain 525.92).